The chain runs to 852 residues: Ubiquitin carboxyl-terminal hydrolase 4 (852 aa).

The 125-residue stretch at 172–296 (ASGTVLLVDV…WSNAHPDFCV (125 aa)) folds into the Rhodanese domain. Residues 369–393 (RSSSSSSNINERPGSVPPQLSNGST) form a disordered region. Positions 488–849 (VGLVNCGNSC…NAYVLFYHRI (362 aa)) constitute a USP domain. The Nucleophile role is filled by cysteine 497. Catalysis depends on histidine 806, which acts as the Proton acceptor.

The protein belongs to the peptidase C19 family.

The protein localises to the cytoplasm. Its subcellular location is the late endosome membrane. It carries out the reaction Thiol-dependent hydrolysis of ester, thioester, amide, peptide and isopeptide bonds formed by the C-terminal Gly of ubiquitin (a 76-residue protein attached to proteins as an intracellular targeting signal).. RFU1 is an inhibitor of deubiquitination activity. Functionally, ubiquitin thioesterase that acts at the late endosome/prevacuolar compartment to recover ubiquitin from ubiquitinated membrane proteins en route to the vacuole. Also removes ubiquitin from soluble proteins targeted to proteasomes. Is essential to maintain a normal level of free ubiquitin. Required for promoting coordination of DNA replication and avoids DNA overreplication. The protein is Ubiquitin carboxyl-terminal hydrolase 4 (DOA4) of Eremothecium gossypii (strain ATCC 10895 / CBS 109.51 / FGSC 9923 / NRRL Y-1056) (Yeast).